Reading from the N-terminus, the 326-residue chain is Holliday junction branch migration complex subunit RuvB (326 aa).

Positions 1-180 (MRSISCSKEY…FGIPLRLEFY (180 aa)) are large ATPase domain (RuvB-L). Residues isoleucine 19, arginine 20, glycine 61, lysine 64, threonine 65, threonine 66, 127-129 (EDF), arginine 170, tyrosine 180, and arginine 217 each bind ATP. Position 65 (threonine 65) interacts with Mg(2+). The segment at 181–251 (SFEELVDIIK…IADSALSKLG (71 aa)) is small ATPAse domain (RuvB-S). The interval 254-326 (KMGLNKLDVD…QGKEYLSLQY (73 aa)) is head domain (RuvB-H). DNA-binding residues include arginine 307 and arginine 312.

This sequence belongs to the RuvB family. As to quaternary structure, homohexamer. Forms an RuvA(8)-RuvB(12)-Holliday junction (HJ) complex. HJ DNA is sandwiched between 2 RuvA tetramers; dsDNA enters through RuvA and exits via RuvB. An RuvB hexamer assembles on each DNA strand where it exits the tetramer. Each RuvB hexamer is contacted by two RuvA subunits (via domain III) on 2 adjacent RuvB subunits; this complex drives branch migration. In the full resolvosome a probable DNA-RuvA(4)-RuvB(12)-RuvC(2) complex forms which resolves the HJ.

It is found in the cytoplasm. The enzyme catalyses ATP + H2O = ADP + phosphate + H(+). In terms of biological role, the RuvA-RuvB-RuvC complex processes Holliday junction (HJ) DNA during genetic recombination and DNA repair, while the RuvA-RuvB complex plays an important role in the rescue of blocked DNA replication forks via replication fork reversal (RFR). RuvA specifically binds to HJ cruciform DNA, conferring on it an open structure. The RuvB hexamer acts as an ATP-dependent pump, pulling dsDNA into and through the RuvAB complex. RuvB forms 2 homohexamers on either side of HJ DNA bound by 1 or 2 RuvA tetramers; 4 subunits per hexamer contact DNA at a time. Coordinated motions by a converter formed by DNA-disengaged RuvB subunits stimulates ATP hydrolysis and nucleotide exchange. Immobilization of the converter enables RuvB to convert the ATP-contained energy into a lever motion, pulling 2 nucleotides of DNA out of the RuvA tetramer per ATP hydrolyzed, thus driving DNA branch migration. The RuvB motors rotate together with the DNA substrate, which together with the progressing nucleotide cycle form the mechanistic basis for DNA recombination by continuous HJ branch migration. Branch migration allows RuvC to scan DNA until it finds its consensus sequence, where it cleaves and resolves cruciform DNA. In Wolbachia sp. subsp. Brugia malayi (strain TRS), this protein is Holliday junction branch migration complex subunit RuvB.